The chain runs to 269 residues: Eukaryotic translation initiation factor 3 subunit G-2 (269 aa).

The RRM domain maps to 189 to 267 (SAVRISNLSE…LILCVEWSKP (79 aa)).

The protein belongs to the eIF-3 subunit G family. In terms of assembly, component of the eukaryotic translation initiation factor 3 (eIF-3) complex. The eIF-3 complex interacts with pix.

It localises to the cytoplasm. In terms of biological role, RNA-binding component of the eukaryotic translation initiation factor 3 (eIF-3) complex, which is involved in protein synthesis of a specialized repertoire of mRNAs and, together with other initiation factors, stimulates binding of mRNA and methionyl-tRNAi to the 40S ribosome. The eIF-3 complex specifically targets and initiates translation of a subset of mRNAs involved in cell proliferation. This subunit can bind 18S rRNA. This is Eukaryotic translation initiation factor 3 subunit G-2 from Drosophila ananassae (Fruit fly).